Consider the following 210-residue polypeptide: Glutathione S-transferase P (210 aa).

One can recognise a GST N-terminal domain in the interval 2-81; it reads PPYTIVYFPV…HLGRSLGLYG (80 aa). Tyrosine 4 bears the Phosphotyrosine; by EGFR mark. Residues tyrosine 8, arginine 14, tryptophan 39, lysine 45, and 52-53 contribute to the glutathione site; that span reads QL. Phosphothreonine is present on threonine 62. 65 to 66 serves as a coordination point for glutathione; the sequence is QS. The region spanning 83–204 is the GST C-terminal domain; it reads DQREAALVDM…SSPDHVNRPI (122 aa). An N6-succinyllysine mark is found at lysine 103 and lysine 116. N6-acetyllysine is present on lysine 128.

It belongs to the GST superfamily. Pi family. Homodimer. Interacts with CDK5.

The protein resides in the cytoplasm. Its subcellular location is the mitochondrion. The protein localises to the nucleus. It catalyses the reaction RX + glutathione = an S-substituted glutathione + a halide anion + H(+). It carries out the reaction prostaglandin J2 + glutathione = prostaglandin J2-S-(R)-glutathione. The enzyme catalyses prostaglandin J2 + glutathione = prostaglandin J2-S-(S)-glutathione. The catalysed reaction is prostaglandin A2 + glutathione = prostaglandin A2-S-(S)-glutathione. It catalyses the reaction 11(S)-hydroxy-14(S),15(S)-epoxy-(5Z,8Z,12E)-eicosatrienoate + glutathione = (11S,15S)-dihydroxy-14(R)-S-glutathionyl-(5Z,8Z,12E)-eicosatrienoate. Conjugation of reduced glutathione to a wide number of exogenous and endogenous hydrophobic electrophiles. Involved in the formation of glutathione conjugates of both prostaglandin A2 (PGA2) and prostaglandin J2 (PGJ2). Participates in the formation of novel hepoxilin regioisomers. Negatively regulates CDK5 activity via p25/p35 translocation to prevent neurodegeneration. The protein is Glutathione S-transferase P (GSTP1) of Cricetulus longicaudatus (Long-tailed dwarf hamster).